Here is a 97-residue protein sequence, read N- to C-terminus: Large ribosomal subunit protein bL28 (97 aa).

This sequence belongs to the bacterial ribosomal protein bL28 family.

In Rickettsia peacockii (strain Rustic), this protein is Large ribosomal subunit protein bL28.